Here is a 227-residue protein sequence, read N- to C-terminus: Uracil-DNA glycosylase 2 (227 aa).

The active-site Proton acceptor is D67.

This sequence belongs to the uracil-DNA glycosylase (UDG) superfamily. UNG family.

It is found in the cytoplasm. The catalysed reaction is Hydrolyzes single-stranded DNA or mismatched double-stranded DNA and polynucleotides, releasing free uracil.. Its function is as follows. Excises uracil residues from the DNA which can arise as a result of misincorporation of dUMP residues by DNA polymerase or due to deamination of cytosine. In Streptomyces coelicolor (strain ATCC BAA-471 / A3(2) / M145), this protein is Uracil-DNA glycosylase 2 (ung2).